The primary structure comprises 1241 residues: DNA-directed RNA polymerase subunit beta (1241 aa).

Belongs to the RNA polymerase beta chain family. As to quaternary structure, the RNAP catalytic core consists of 2 alpha, 1 beta, 1 beta' and 1 omega subunit. When a sigma factor is associated with the core the holoenzyme is formed, which can initiate transcription.

It carries out the reaction RNA(n) + a ribonucleoside 5'-triphosphate = RNA(n+1) + diphosphate. DNA-dependent RNA polymerase catalyzes the transcription of DNA into RNA using the four ribonucleoside triphosphates as substrates. The sequence is that of DNA-directed RNA polymerase subunit beta from Clostridium botulinum (strain Alaska E43 / Type E3).